We begin with the raw amino-acid sequence, 228 residues long: Octanoyltransferase (228 aa).

Residues 30 to 214 (KKIGDTLLLL…YFGKVFGKSL (185 aa)) form the BPL/LPL catalytic domain. Substrate is bound by residues 75–82 (RGGDVTYH), 144–146 (AIG), and 157–159 (GFA). The active-site Acyl-thioester intermediate is Cys175.

Belongs to the LipB family.

The protein localises to the cytoplasm. The catalysed reaction is octanoyl-[ACP] + L-lysyl-[protein] = N(6)-octanoyl-L-lysyl-[protein] + holo-[ACP] + H(+). Its pathway is protein modification; protein lipoylation via endogenous pathway; protein N(6)-(lipoyl)lysine from octanoyl-[acyl-carrier-protein]: step 1/2. In terms of biological role, catalyzes the transfer of endogenously produced octanoic acid from octanoyl-acyl-carrier-protein onto the lipoyl domains of lipoate-dependent enzymes. Lipoyl-ACP can also act as a substrate although octanoyl-ACP is likely to be the physiological substrate. This chain is Octanoyltransferase, found in Caldicellulosiruptor bescii (strain ATCC BAA-1888 / DSM 6725 / KCTC 15123 / Z-1320) (Anaerocellum thermophilum).